The primary structure comprises 316 residues: Ribosomal protein L11 methyltransferase (316 aa).

Residues T157, G178, D200, and N243 each contribute to the S-adenosyl-L-methionine site.

It belongs to the methyltransferase superfamily. PrmA family.

Its subcellular location is the cytoplasm. It catalyses the reaction L-lysyl-[protein] + 3 S-adenosyl-L-methionine = N(6),N(6),N(6)-trimethyl-L-lysyl-[protein] + 3 S-adenosyl-L-homocysteine + 3 H(+). In terms of biological role, methylates ribosomal protein L11. This Streptococcus pneumoniae serotype 4 (strain ATCC BAA-334 / TIGR4) protein is Ribosomal protein L11 methyltransferase.